A 561-amino-acid chain; its full sequence is Mercuric reductase (561 aa).

Positions Met1–Thr65 constitute an HMA domain. A metal cation is bound by residues Cys11 and Cys14. The FAD site is built by Ala110, Gly130, and Thr135. Cys136 and Cys141 are oxidised to a cystine. Residues Lys145, Ala211, Asp403, and Val411 each contribute to the FAD site. Residues Cys558 and Cys559 each coordinate Hg(2+).

It belongs to the class-I pyridine nucleotide-disulfide oxidoreductase family. As to quaternary structure, homodimer. FAD is required as a cofactor.

It catalyses the reaction Hg + NADP(+) + H(+) = Hg(2+) + NADPH. Resistance to Hg(2+) in bacteria appears to be governed by a specialized system which includes mercuric reductase. MerA protein is responsible for volatilizing mercury as Hg(0). The protein is Mercuric reductase (merA) of Enterobacter agglomerans (Erwinia herbicola).